Here is a 400-residue protein sequence, read N- to C-terminus: Proline-rich protein 5 (400 aa).

The disordered stretch occupies residues 301–358 (TDSTSKLSMAGTKPPGEGERPPISNGQFPPLHNLSDSQQGLYNSQRDSPLLPAPSSSP). Residues 334–347 (LSDSQQGLYNSQRD) are compositionally biased toward polar residues. Residues 348 to 358 (SPLLPAPSSSP) show a composition bias toward low complexity.

This sequence belongs to the PROTOR family. In terms of assembly, associated component of the mechanistic target of rapamycin complex 2 (mTORC2).

Its function is as follows. Associated subunit of mTORC2, which regulates cell growth and survival in response to hormonal signals. This is Proline-rich protein 5 (prr5) from Xenopus laevis (African clawed frog).